A 644-amino-acid polypeptide reads, in one-letter code: Zinc transporter ZIP4 (644 aa).

A signal peptide spans 1-27 (MAILAWLEPRPLLAVLVLVLTMRMAQP). The Extracellular segment spans residues 28-323 (AHLLTLLSSG…QNQLSQAEKY (296 aa)). Disulfide bonds link C59–C64, C67–C103, and C153–C188. Residues 231–259 (TETHSDHHHQEKRVNRQGPTPLTAPNSSS) are disordered. The span at 233–244 (THSDHHHQEKRV) shows a compositional bias: basic and acidic residues. The segment covering 247-259 (QGPTPLTAPNSSS) has biased composition (polar residues). A disulfide bridge links C266 with C305. Residues 324–344 (LYGSLATLLICLCSTFGLLLL) traverse the membrane as a helical segment. The Cytoplasmic portion of the chain corresponds to 345–355 (TCAACSTAAHY). Residues 356–376 (VIQTFLGMAVGALTGDALLHL) form a helical membrane-spanning segment. At 377-404 (TPKVLGLHQHGGDSEHRADSHGPQTTWR) the chain is on the extracellular side. A helical membrane pass occupies residues 405-425 (LVVALSGLYVFFLFEKLCDLL). At 426–495 (LPQDPEDRKG…KSPELRLLPY (70 aa)) the chain is on the cytoplasmic side. An Essential for SLC39A4 endocytosis motif is present at residues 449–451 (LQL). A compositionally biased stretch (basic and acidic residues) spans 456 to 467 (LRPPKQPHEGSR). A disordered region spans residues 456–484 (LRPPKQPHEGSRADLVAEESPELLSPEPR). A helical transmembrane segment spans residues 496–515 (MITLGDGLHNFADGLAVGAA). The Zn(2+) site is built by H504, N505, and D508. Residues 516–523 (FASSWKTG) are Extracellular-facing. A helical membrane pass occupies residues 524-550 (LATSLAVFCHEVPHELGDFAALLHAGL). Residues H533, E534, and H537 each contribute to the Zn(2+) site. Over 551–555 (PVSRA) the chain is Cytoplasmic. The chain crosses the membrane as a helical span at residues 556–576 (LLLNLASGLTAFAGLYVALAL). Topologically, residues 577–583 (GVGEESE) are extracellular. A helical transmembrane segment spans residues 584-604 (SWTLAVAIGLFLYVALCDMLP). At 605-614 (AMLNVRDPRP) the chain is on the cytoplasmic side. A helical membrane pass occupies residues 615-635 (WLLFLLHNVGLLGGWAVLLLL). At 636 to 644 (SLYEDSIAL) the chain is on the extracellular side.

This sequence belongs to the ZIP transporter (TC 2.A.5) family. In terms of assembly, homodimer. The extracellular N-terminal ectodomain is cleaved when cells are Zn(2+) deficient, N-terminally cleaved SLC39A4 is internalized at a faster rate. Post-translationally, under excess Zn(2+) conditions, SLC39A4 on the cell surface is rapidly endocytosed, ubiquitinated and degraded. In terms of processing, glycosylated.

It localises to the cell membrane. The protein localises to the recycling endosome membrane. Its subcellular location is the apical cell membrane. The catalysed reaction is Zn(2+)(in) = Zn(2+)(out). In terms of biological role, selective transporter that mediates the uptake of Zn(2+). Plays an essential role for dietary zinc uptake from small intestine. The Zn(2+) uniporter activity is regulated by zinc availability. Also exhibits polyspecific binding and transport of Cu(2+), Cd(2+) and possibly Ni(2+) but at higher concentrations. In Pteropus alecto (Black flying fox), this protein is Zinc transporter ZIP4.